The sequence spans 445 residues: Phosphoglucosamine mutase (445 aa).

The Phosphoserine intermediate role is filled by serine 101. 4 residues coordinate Mg(2+): serine 101, aspartate 240, aspartate 242, and aspartate 244. Position 101 is a phosphoserine (serine 101).

Belongs to the phosphohexose mutase family. Mg(2+) is required as a cofactor. Activated by phosphorylation.

It catalyses the reaction alpha-D-glucosamine 1-phosphate = D-glucosamine 6-phosphate. In terms of biological role, catalyzes the conversion of glucosamine-6-phosphate to glucosamine-1-phosphate. This Azotobacter vinelandii (strain DJ / ATCC BAA-1303) protein is Phosphoglucosamine mutase.